We begin with the raw amino-acid sequence, 478 residues long: MIKKIPMIIGGVVQNTSGYGMRELTLNNNKVNIPIITQSDVEAIQSLNIENKLTINQIVNFLYTVGQKWKSETYSRRLTYIRDLIKFLGYSQEMAKLEANWISMILCSKSALYDIVENDLSSRHIIDEWIPQGECYVKALPKGKSVHLLAGNVPLSGVTSILRAILTKNECIIKTSSADPFTATALVNSFIDVDAEHPITRSISVMYWSHSEDLAIPKQIMSCADVVIAWGGDDAIKWATEHAPSHADILKFGPKKSISIVDNPTDIKAAAIGVAHDICFYDQQACFSTQDIYYIGDSIDIFFDELAQQLNKYKDILPKGERNFDEKAAFSLTERECLFAKYKVQKGESQSWLLTQSPAGSFGNQPLSRSAYIHQVNDISEVIPFVHKAVTQTVAIAPWESSFKYRDILAEHGAERIIEAGMNNIFRVGGAHDGMRPLQRLVNYISHERPSTYTTKDVSVKIEQTRYLEEDKFLVFVP.

Belongs to the LuxC family.

The enzyme catalyses a long-chain fatty aldehyde + NADP(+) + CoA = a long-chain fatty acyl-CoA + NADPH + H(+). The protein operates within lipid metabolism; fatty acid reduction for biolumincescence. LuxC is the fatty acid reductase enzyme responsible for synthesis of the aldehyde substrate for the luminescent reaction catalyzed by luciferase. In Photobacterium leiognathi, this protein is Long-chain acyl-protein thioester reductase 2 (luxC).